The chain runs to 208 residues: Uracil phosphoribosyltransferase (208 aa).

5-phospho-alpha-D-ribose 1-diphosphate is bound by residues R78, R103, and 130–138 (DPMLATGGS). Residues I193 and 198-200 (GDA) each bind uracil. D199 is a binding site for 5-phospho-alpha-D-ribose 1-diphosphate.

It belongs to the UPRTase family. Mg(2+) serves as cofactor.

The catalysed reaction is UMP + diphosphate = 5-phospho-alpha-D-ribose 1-diphosphate + uracil. The protein operates within pyrimidine metabolism; UMP biosynthesis via salvage pathway; UMP from uracil: step 1/1. With respect to regulation, allosterically activated by GTP. Functionally, catalyzes the conversion of uracil and 5-phospho-alpha-D-ribose 1-diphosphate (PRPP) to UMP and diphosphate. The sequence is that of Uracil phosphoribosyltransferase from Citrobacter koseri (strain ATCC BAA-895 / CDC 4225-83 / SGSC4696).